Here is a 196-residue protein sequence, read N- to C-terminus: MSRYRGPRLKKIRRLGALPGLTRKTPKSGSNLKKKFHSGKKEQYRIRLQEKQKLRFHYGLTERQLLRYVHIAGKAKRSTGQVLLQLLEMRLDNILFRLGMAATIPGARQLVNHRHILVNGRIVNIPSFRCKPRDIITTKDNQRSQSLVQNSIASSDPGKLPKHLTIDTLEYKGLVNKILDRKWVGLKINELLVVEY.

The disordered stretch occupies residues 16–36 (GALPGLTRKTPKSGSNLKKKF). Residues 89 to 169 (MRLDNILFRL…LPKHLTIDTL (81 aa)) form the S4 RNA-binding domain.

This sequence belongs to the universal ribosomal protein uS4 family. As to quaternary structure, part of the 30S ribosomal subunit. Contacts protein S5. The interaction surface between S4 and S5 is involved in control of translational fidelity.

The protein resides in the plastid. Its subcellular location is the chloroplast. Its function is as follows. One of the primary rRNA binding proteins, it binds directly to 16S rRNA where it nucleates assembly of the body of the 30S subunit. With S5 and S12 plays an important role in translational accuracy. The sequence is that of Small ribosomal subunit protein uS4c (rps4) from Brachypodium pinnatum (Tor grass).